A 638-amino-acid chain; its full sequence is Broad-specificity ulvan lyase (638 aa).

Positions 1–27 (MKRRNFIQLSSLATIGMSLPSAGIVNA) are cleaved as a signal peptide.

This sequence belongs to the polysaccharide lyase 37 family.

Its subcellular location is the periplasm. It carries out the reaction Endolytic cleavage of (1-&gt;4)-beta-galactosaminic bonds between N-acetylgalactosamine and either D-glucuronic acid or L-iduronic acid to produce a mixture of Delta(4)-unsaturated oligosaccharides of different sizes that are ultimately degraded to Delta(4)-unsaturated tetra- and disaccharides.. The enzyme catalyses Elimination of sulfate, appears to act on linkages between N-acetyl-D-glucosamine and uronate. Product is an unsaturated sugar.. In terms of biological role, broad-specificity lyase involved in ulvan degradation. Ulvan is the main polysaccharide component of the Ulvales (green seaweed) cell wall. It is composed of disaccharide building blocks comprising 3-sulfated rhamnose (Rha3S) linked to D-glucuronic acid (GlcA), L-iduronic acid (IduA), or D-xylose (Xyl). Ulvan lyase catalyzes the endolytic cleavage of the glycosidic bond between Rha3S and the uronic acids GlcA or IduA, producing oligosaccharides that have unsaturated 4-deoxy-L-threo-hex-4-enopyranosiduronic acid (deltaUA) at the non-reducing end. This results eventually in the degradation of the ulvan polysaccharide into deltaUA-Rha3S disaccharides and deltaUA-Rha3S-Xyl-Rha3S tetrasaccharides. It is also able to degrade the glycosaminoglycans heparan sulfate and chondroitin sulfate. Not active against pectin, xanthan or alginate. This Formosa agariphila (strain DSM 15362 / KCTC 12365 / LMG 23005 / KMM 3901 / M-2Alg 35-1) protein is Broad-specificity ulvan lyase.